Reading from the N-terminus, the 326-residue chain is UDP-3-O-acylglucosamine N-acyltransferase (326 aa).

Histidine 225 acts as the Proton acceptor in catalysis.

The protein belongs to the transferase hexapeptide repeat family. LpxD subfamily. Homotrimer.

The catalysed reaction is a UDP-3-O-[(3R)-3-hydroxyacyl]-alpha-D-glucosamine + a (3R)-hydroxyacyl-[ACP] = a UDP-2-N,3-O-bis[(3R)-3-hydroxyacyl]-alpha-D-glucosamine + holo-[ACP] + H(+). It participates in bacterial outer membrane biogenesis; LPS lipid A biosynthesis. Functionally, catalyzes the N-acylation of UDP-3-O-acylglucosamine using 3-hydroxyacyl-ACP as the acyl donor. Is involved in the biosynthesis of lipid A, a phosphorylated glycolipid that anchors the lipopolysaccharide to the outer membrane of the cell. This chain is UDP-3-O-acylglucosamine N-acyltransferase, found in Acidovorax ebreus (strain TPSY) (Diaphorobacter sp. (strain TPSY)).